Consider the following 484-residue polypeptide: Zinc metalloproteinase-disintegrin jerdonitin (484 aa).

Positions 1 to 20 are cleaved as a signal peptide; sequence MIQVLLVTICLAVFPYQGSS. The propeptide occupies 21–191; sequence IILESGNIDD…KLSQIMIPPE (171 aa). Gln192 bears the Pyrrolidone carboxylic acid mark. The Peptidase M12B domain maps to 194-392; it reads RYIELVIVAD…FTSRCLYNEP (199 aa). Ca(2+) is bound by residues Glu197 and Asp281. Cystine bridges form between Cys305/Cys387, Cys345/Cys369, and Cys347/Cys352. His330 is a Zn(2+) binding site. Glu331 is a catalytic residue. Zn(2+)-binding residues include His334 and His340. Residues Cys387, Asn390, Val402, Asn405, Glu409, Glu412, and Asp415 each contribute to the Ca(2+) site. A Disintegrin domain is found at 400–484; sequence PSVCGNYYME…AGCPRNPFHA (85 aa). 7 disulfide bridges follow: Cys403–Cys422, Cys414–Cys432, Cys416–Cys427, Cys426–Cys449, Cys440–Cys446, Cys445–Cys470, and Cys458–Cys477. Positions 462–464 match the Cell attachment site motif; that stretch reads RGD.

It belongs to the venom metalloproteinase (M12B) family. P-II subfamily. P-IIb sub-subfamily. As to quaternary structure, monomer. Zn(2+) serves as cofactor. Post-translationally, the N-terminus is blocked. In terms of tissue distribution, expressed by the venom gland.

The protein resides in the secreted. With respect to regulation, fibrinogenolytic activity is completely inhibited by EDTA, but not by PMSF. Snake venom zinc metalloproteinase that inhibits ADP-induced human platelet aggregation (IC(50)=120 nM (native) and IC(50)=248 nM (recombinant)). May act by binding to the receptor GPIIb/GPIIIa (ITGA2B/ITGB3) on the platelet surface. Degrades the alpha-chain of fibrinogen completely and the beta-chain partially, leaving the gamma chain intact. Also inhibits the growth of several cell lines, including human liver cancer cells (Bel7402), human leukemia cells (K562) and human gastric carcinoma cells (BGC823). This chain is Zinc metalloproteinase-disintegrin jerdonitin, found in Protobothrops jerdonii (Jerdon's pitviper).